The primary structure comprises 117 residues: PBP1-interacting protein XAC1 (117 aa).

The tract at residues 1 to 60 (MSKAPSQPAKKWMSARTLAKSEDATNRKSNTAAPASQPSQQPASVMHERPTPPPPAPVQL) is disordered. A compositionally biased stretch (low complexity) spans 32 to 44 (AAPASQPSQQPAS).

In terms of assembly, forms a complex composed of at least MKT1, PBP1, XAC1 and LSM12. Forms a complex composed of at least MKT1L, PBP1, XAC1 and LSM12.

The protein localises to the cytoplasm. Involved in post-transcriptional regulation of gene expression. The protein is PBP1-interacting protein XAC1 of Trypanosoma brucei brucei (strain 927/4 GUTat10.1).